A 487-amino-acid chain; its full sequence is Glutamate--tRNA ligase (487 aa).

The short motif at 12–22 (PSPTGYMHVGN) is the 'HIGH' region element. A 'KMSKS' region motif is present at residues 249 to 253 (KLSKR). K252 contributes to the ATP binding site.

This sequence belongs to the class-I aminoacyl-tRNA synthetase family. Glutamate--tRNA ligase type 1 subfamily. As to quaternary structure, monomer.

The protein localises to the cytoplasm. It catalyses the reaction tRNA(Glu) + L-glutamate + ATP = L-glutamyl-tRNA(Glu) + AMP + diphosphate. Its function is as follows. Catalyzes the attachment of glutamate to tRNA(Glu) in a two-step reaction: glutamate is first activated by ATP to form Glu-AMP and then transferred to the acceptor end of tRNA(Glu). The protein is Glutamate--tRNA ligase of Clostridium novyi (strain NT).